The chain runs to 296 residues: Urease accessory protein UreD (296 aa).

This sequence belongs to the UreD family. UreD, UreF and UreG form a complex that acts as a GTP-hydrolysis-dependent molecular chaperone, activating the urease apoprotein by helping to assemble the nickel containing metallocenter of UreC. The UreE protein probably delivers the nickel.

The protein localises to the cytoplasm. In terms of biological role, required for maturation of urease via the functional incorporation of the urease nickel metallocenter. This is Urease accessory protein UreD from Synechococcus sp. (strain CC9311).